The sequence spans 237 residues: UPF0688 protein C1orf174 homolog (237 aa).

The segment at 1–187 is disordered; the sequence is MRSRKLAGGV…LLDDDSNQPM (187 aa). The span at 11–28 shows a compositional bias: low complexity; that stretch reads RSSARLRARSCSAASASA. The span at 29–47 shows a compositional bias: polar residues; the sequence is QDTHVTTSAQTACQTPSSH. A compositionally biased stretch (basic and acidic residues) spans 48 to 76; sequence KATDRRTSKKFKYDKGHIVKSELQKHRSD. S183 is modified (phosphoserine).

It belongs to the UPF0688 family.

The protein localises to the nucleus. In Bos taurus (Bovine), this protein is UPF0688 protein C1orf174 homolog.